The chain runs to 402 residues: MSRVSQARNLGKYFLLIDNMLVVLGFFVVFPLISIRFVDQMGWAAVMVGIALGLRQFIQQGLGIFGGAIADRFGAKPMIVTGMLMRAAGFATMGIAHEPWLLWFSCFLSGLGGTLFDPPRSALVVKLIRPEQRGRFFSLLMMQDSAGAVIGALLGSWLLQYDFRLVCATGAILFILCALFNAWLLPAWKLSTVRTPVREGMRRVMSDKRFVTYVLTLAGYYMLAVQVMLMLPIMVNDIAGSPAAVKWMYAIEACLSLTLLYPIARWSEKRFRLEHRLMAGLLVMSLSMIPIGMVGNLQQLFTLICAFYIGSVIAEPARETLSASLADARARGSYMGFSRLGLAIGGAIGYIGGGWLFDMGKALAQPELPWMMLGIIGFITFLALGWQFSHKRTPRRMLEPGA.

Over 1-12 (MSRVSQARNLGK) the chain is Cytoplasmic. The chain crosses the membrane as a helical span at residues 13–33 (YFLLIDNMLVVLGFFVVFPLI). Over 34–98 (SIRFVDQMGW…GFATMGIAHE (65 aa)) the chain is Periplasmic. The chain crosses the membrane as a helical span at residues 99 to 116 (PWLLWFSCFLSGLGGTLF). The Cytoplasmic segment spans residues 117-138 (DPPRSALVVKLIRPEQRGRFFS). Residues 139-159 (LLMMQDSAGAVIGALLGSWLL) form a helical membrane-spanning segment. At 160 to 164 (QYDFR) the chain is on the periplasmic side. A helical membrane pass occupies residues 165–185 (LVCATGAILFILCALFNAWLL). Topologically, residues 186 to 213 (PAWKLSTVRTPVREGMRRVMSDKRFVTY) are cytoplasmic. The chain crosses the membrane as a helical span at residues 214–234 (VLTLAGYYMLAVQVMLMLPIM). Topologically, residues 235–243 (VNDIAGSPA) are periplasmic. A helical transmembrane segment spans residues 244-264 (AVKWMYAIEACLSLTLLYPIA). Residues 265-276 (RWSEKRFRLEHR) are Cytoplasmic-facing. The helical transmembrane segment at 277–297 (LMAGLLVMSLSMIPIGMVGNL) threads the bilayer. The Periplasmic portion of the chain corresponds to 298–299 (QQ). A helical membrane pass occupies residues 300-320 (LFTLICAFYIGSVIAEPARET). At 321–339 (LSASLADARARGSYMGFSR) the chain is on the cytoplasmic side. A helical transmembrane segment spans residues 340-360 (LGLAIGGAIGYIGGGWLFDMG). Over 361 to 367 (KALAQPE) the chain is Periplasmic. Residues 368 to 388 (LPWMMLGIIGFITFLALGWQF) traverse the membrane as a helical segment. Residues 389–402 (SHKRTPRRMLEPGA) are Cytoplasmic-facing.

The protein belongs to the major facilitator superfamily. DHA1 family. MdtH (TC 2.A.1.2.21) subfamily.

It is found in the cell inner membrane. The chain is Multidrug resistance protein MdtH from Salmonella schwarzengrund (strain CVM19633).